The chain runs to 90 residues: DNA-binding protein HU-beta (90 aa).

Belongs to the bacterial histone-like protein family. In terms of assembly, heterodimer of an alpha and a beta chain.

Histone-like DNA-binding protein which is capable of wrapping DNA to stabilize it, and thus to prevent its denaturation under extreme environmental conditions. This Serratia marcescens protein is DNA-binding protein HU-beta (hupB).